A 364-amino-acid chain; its full sequence is tRNA 2-selenouridine synthase (364 aa).

The Rhodanese domain occupies Leu-14 to Ile-137. Cys-97 functions as the S-selanylcysteine intermediate in the catalytic mechanism.

It belongs to the SelU family. In terms of assembly, monomer.

The enzyme catalyses 5-methylaminomethyl-2-thiouridine(34) in tRNA + selenophosphate + (2E)-geranyl diphosphate + H2O + H(+) = 5-methylaminomethyl-2-selenouridine(34) in tRNA + (2E)-thiogeraniol + phosphate + diphosphate. The catalysed reaction is 5-methylaminomethyl-2-thiouridine(34) in tRNA + (2E)-geranyl diphosphate = 5-methylaminomethyl-S-(2E)-geranyl-thiouridine(34) in tRNA + diphosphate. It catalyses the reaction 5-methylaminomethyl-S-(2E)-geranyl-thiouridine(34) in tRNA + selenophosphate + H(+) = 5-methylaminomethyl-2-(Se-phospho)selenouridine(34) in tRNA + (2E)-thiogeraniol. It carries out the reaction 5-methylaminomethyl-2-(Se-phospho)selenouridine(34) in tRNA + H2O = 5-methylaminomethyl-2-selenouridine(34) in tRNA + phosphate. Its function is as follows. Involved in the post-transcriptional modification of the uridine at the wobble position (U34) of tRNA(Lys), tRNA(Glu) and tRNA(Gln). Catalyzes the conversion of 2-thiouridine (S2U-RNA) to 2-selenouridine (Se2U-RNA). Acts in a two-step process involving geranylation of 2-thiouridine (S2U) to S-geranyl-2-thiouridine (geS2U) and subsequent selenation of the latter derivative to 2-selenouridine (Se2U) in the tRNA chain. The sequence is that of tRNA 2-selenouridine synthase from Shigella sonnei (strain Ss046).